Consider the following 288-residue polypeptide: Polyisoprenoid diphosphate/phosphate phosphohydrolase PLPP6 (288 aa).

The disordered stretch occupies residues 1–82; the sequence is MPSPKARSGS…STGGGGQQLP (82 aa). Over 1-127 the chain is Cytoplasmic; sequence MPSPKARSGS…EDSSWGSVRP (127 aa). The chain crosses the membrane as a helical span at residues 128–148; the sequence is LMKLIEVSGHGIPWLAGAAYC. Residues 149–161 lie on the Lumenal side of the membrane; it reads LYKSDSPAGQEVM. The chain crosses the membrane as a helical span at residues 162–182; it reads LNLLMALVLDVVLVGVLKAVV. Residues 179-187 form a phosphatase sequence motif I region; the sequence is KAVVRRRRP. The Cytoplasmic segment spans residues 183–223; sequence RRRRPAHNRMDMFATFSVDSYSFPSGHATRAAMCARFLLNH. The tract at residues 206–209 is phosphatase sequence motif II; it reads PSGH. His-209 (proton donors) is an active-site residue. The chain crosses the membrane as a helical span at residues 224–244; sequence LVLAAPLRVLVLLWATIVGFS. Positions 244-255 are phosphatase sequence motif III; it reads SRVLLGRHNVTD. At 245-255 the chain is on the lumenal side; sequence RVLLGRHNVTD. Residue His-251 is the Nucleophile of the active site. A helical membrane pass occupies residues 256–276; the sequence is VAFGFFMGYWQYNLVEMLWLS. Over 277 to 288 the chain is Cytoplasmic; sequence PVMLQSAIGQLH.

This sequence belongs to the PA-phosphatase related phosphoesterase family.

It is found in the endoplasmic reticulum membrane. The protein resides in the nucleus envelope. Its subcellular location is the nucleus inner membrane. It catalyses the reaction presqualene diphosphate + H2O = presqualene phosphate + phosphate + H(+). It carries out the reaction presqualene phosphate + H2O = presqualene alcohol + phosphate. The catalysed reaction is (2E,6E)-farnesyl diphosphate + H2O = (2E,6E)-farnesyl phosphate + phosphate + H(+). The enzyme catalyses (2E,6E)-farnesyl phosphate + H2O = (2E,6E)-farnesol + phosphate. It catalyses the reaction (2E,6E,10E)-geranylgeranyl diphosphate + H2O = (2E,6E,10E)-geranylgeranyl phosphate + phosphate + H(+). It carries out the reaction (2E,6E,10E)-geranylgeranyl phosphate + H2O = (2E,6E,10E)-geranylgeraniol + phosphate. The catalysed reaction is (2E)-geranyl diphosphate + H2O = (2E)-geranyl phosphate + phosphate + H(+). The enzyme catalyses (2E)-geranyl phosphate + H2O = (2E)-geraniol + phosphate. It catalyses the reaction 1,2-dihexadecanoyl-sn-glycero-3-phosphate + H2O = 1,2-dihexadecanoyl-sn-glycerol + phosphate. Magnesium-independent polyisoprenoid diphosphatase that catalyzes the sequential dephosphorylation of presqualene, farnesyl, geranyl and geranylgeranyl diphosphates. May regulate the biosynthesis of cholesterol and related sterols by dephosphorylating presqualene and farnesyl diphosphate, two key intermediates in this biosynthetic pathway. May also play a role in protein prenylation by acting on farnesyl diphosphate and its derivative geranylgeranyl diphosphate, two precursors for the addition of isoprenoid anchors to membrane proteins. Has a lower activity towards phosphatidic acid (PA), but through phosphatidic acid dephosphorylation may participate in the biosynthesis of phospholipids and triacylglycerols. May also act on ceramide-1-P, lysophosphatidic acid (LPA) and sphing-4-enine 1-phosphate/sphingosine-1-phosphate. This Danio rerio (Zebrafish) protein is Polyisoprenoid diphosphate/phosphate phosphohydrolase PLPP6 (plpp6).